The primary structure comprises 181 residues: Ribonuclease HII (181 aa).

An RNase H type-2 domain is found at 1–181 (MICGIDEVGR…SLHRKSFRLI (181 aa)). A divalent metal cation-binding residues include Asp6, Glu7, and Asp98.

This sequence belongs to the RNase HII family. It depends on Mn(2+) as a cofactor. Mg(2+) serves as cofactor.

The protein resides in the cytoplasm. The enzyme catalyses Endonucleolytic cleavage to 5'-phosphomonoester.. Its function is as follows. Endonuclease that specifically degrades the RNA of RNA-DNA hybrids. In Borrelia recurrentis (strain A1), this protein is Ribonuclease HII.